A 787-amino-acid polypeptide reads, in one-letter code: Putative pentatricopeptide repeat-containing protein At1g69350, mitochondrial (787 aa).

Residues 1–16 (MTQYMPLFRSCSSLRL) constitute a mitochondrion transit peptide. 19 PPR repeats span residues 33-63 (DPLP…FPYP), 64-98 (DSFM…TTQI), 99-134 (SKFV…GVDD), 135-165 (DAVI…MPVR), 166-200 (DLVA…GVEP), 201-235 (DAVT…MFDL), 236-266 (DETL…IAKK), 267-301 (NAVS…GIEP), 302-336 (NLVT…ELDP), 338-368 (YESL…VSDR), 369-403 (NIVA…RIKP), 404-434 (DAFT…VIRT), 438-468 (DEFV…IKHR), 469-503 (SVVT…YLEM), 504-534 (NEVT…LIIS), 538-568 (DLFT…MSSR), 569-603 (SIVS…GTKP), 604-638 (NEVV…GVSP), and 639-669 (NSEH…MPFL). A type E motif region spans residues 674 to 749 (VWGSLVNGCR…VPGYSAIEID (76 aa)). The interval 750 to 780 (QKVFRFGAGEENRIQTDEIYRFLGNLQNLTN) is type E(+) motif.

Belongs to the PPR family. PCMP-E subfamily.

It localises to the mitochondrion. The polypeptide is Putative pentatricopeptide repeat-containing protein At1g69350, mitochondrial (PCMP-E66) (Arabidopsis thaliana (Mouse-ear cress)).